Reading from the N-terminus, the 144-residue chain is Aklanonic acid methyl ester cyclase AcmA (144 aa).

The substrate site is built by asparagine 51 and glutamine 105.

This sequence belongs to the polyketide cyclase DnrD family. Homotetramer.

It catalyses the reaction methyl aklanonate = aklaviketone. The protein operates within antibiotic biosynthesis; daunorubicin biosynthesis. It participates in antibiotic biosynthesis; carminomycin biosynthesis. It functions in the pathway antibiotic biosynthesis; rhodomycin biosynthesis. Its pathway is antibiotic biosynthesis; aclacinomycin biosynthesis. Functionally, involved in the biosynthesis of aklavinone which is an important precursor common to the formation of the clinically significant anthracyclines such as carminomycin, daunorubicin (daunomycin), rhodomycin, aclacinomycin T (aklavin) and aclacinomycin A (aclarubicin). These compounds are aromatic polyketide antibiotics that exhibit high cytotoxicity and are widely applied in the chemotherapy of a variety of cancers. Catalyzes the cyclization of aklanonic acid methyl ester to yield aklaviketone. It is also able to use nogalonic acid methyl ester as substrate, but produces exclusively auraviketone with C9-R stereochemistry. This Streptomyces galilaeus protein is Aklanonic acid methyl ester cyclase AcmA (acma).